A 457-amino-acid polypeptide reads, in one-letter code: Adenylosuccinate synthetase (457 aa).

Residues 45 to 51 (GDEGKGK) and 73 to 75 (GHT) contribute to the GTP site. The active-site Proton acceptor is the Asp-46. Mg(2+) is bound by residues Asp-46 and Gly-73. IMP contacts are provided by residues 46–49 (DEGK), 71–74 (NAGH), Thr-163, Arg-177, Asn-255, Thr-270, and Arg-334. Catalysis depends on His-74, which acts as the Proton donor. 330–336 (VTTKRVR) is a substrate binding site. Residues Arg-336, 362 to 364 (KLD), and 444 to 446 (GVG) contribute to the GTP site.

It belongs to the adenylosuccinate synthetase family. As to quaternary structure, homodimer. It depends on Mg(2+) as a cofactor.

Its subcellular location is the cytoplasm. It carries out the reaction IMP + L-aspartate + GTP = N(6)-(1,2-dicarboxyethyl)-AMP + GDP + phosphate + 2 H(+). Its pathway is purine metabolism; AMP biosynthesis via de novo pathway; AMP from IMP: step 1/2. Functionally, plays an important role in the de novo pathway and in the salvage pathway of purine nucleotide biosynthesis. Catalyzes the first committed step in the biosynthesis of AMP from IMP. The polypeptide is Adenylosuccinate synthetase (Aedes aegypti (Yellowfever mosquito)).